A 280-amino-acid polypeptide reads, in one-letter code: Vitamin B12-binding protein (280 aa).

A signal peptide spans 1–27 (MMPLGLFPLPRAAAVLLISLLTLPAQA). Positions 30 to 277 (RVISLSPSTT…QMASIPTPVA (248 aa)) constitute a Fe/B12 periplasmic-binding domain. Residue Tyr-57 coordinates cyanocob(III)alamin. The cysteines at positions 190 and 266 are disulfide-linked.

Belongs to the BtuF family. The complex is composed of two ATP-binding proteins (BtuD), two transmembrane proteins (BtuC) and a solute-binding protein (BtuF).

Its subcellular location is the periplasm. Part of the ABC transporter complex BtuCDF involved in vitamin B12 import. Binds vitamin B12 and delivers it to the periplasmic surface of BtuC. In Yersinia pseudotuberculosis serotype O:3 (strain YPIII), this protein is Vitamin B12-binding protein.